Here is a 398-residue protein sequence, read N- to C-terminus: Argininosuccinate synthase (398 aa).

9–17 (AYSGGLDTS) is a binding site for ATP. Tyr85 provides a ligand contact to L-citrulline. Gly115 lines the ATP pocket. Positions 117, 121, and 122 each coordinate L-aspartate. Asn121 serves as a coordination point for L-citrulline. Residues Arg125, Ser173, Glu258, and Tyr270 each contribute to the L-citrulline site.

It belongs to the argininosuccinate synthase family. Type 1 subfamily. Homotetramer.

It localises to the cytoplasm. The catalysed reaction is L-citrulline + L-aspartate + ATP = 2-(N(omega)-L-arginino)succinate + AMP + diphosphate + H(+). It functions in the pathway amino-acid biosynthesis; L-arginine biosynthesis; L-arginine from L-ornithine and carbamoyl phosphate: step 2/3. This is Argininosuccinate synthase from Streptococcus pneumoniae (strain Hungary19A-6).